The primary structure comprises 498 residues: ATP synthase subunit beta, chloroplastic (498 aa).

172–179 lines the ATP pocket; it reads GGAGVGKT.

It belongs to the ATPase alpha/beta chains family. F-type ATPases have 2 components, CF(1) - the catalytic core - and CF(0) - the membrane proton channel. CF(1) has five subunits: alpha(3), beta(3), gamma(1), delta(1), epsilon(1). CF(0) has four main subunits: a(1), b(1), b'(1) and c(9-12).

It localises to the plastid. The protein localises to the chloroplast thylakoid membrane. It catalyses the reaction ATP + H2O + 4 H(+)(in) = ADP + phosphate + 5 H(+)(out). Its function is as follows. Produces ATP from ADP in the presence of a proton gradient across the membrane. The catalytic sites are hosted primarily by the beta subunits. The chain is ATP synthase subunit beta, chloroplastic from Elaeis oleifera (American oil palm).